Here is a 274-residue protein sequence, read N- to C-terminus: MGTDSRAAGALLARASTLHLQTGNLLNWGRLRKKCPSTHSEELRDCIQKTLNEWSSQISPDLIREFPDVLECTVSHAVEKINPDEREEMKVSAKLFIVGSNSSSSTRNAVDMACSVLGVAQLDSVIIASPPVEDGVNLSLEHLQPYWEELQNLVQSKKIVAIGTSDLDKTQLEQLYQWAQVKPNSNQVNLASCCVMPPDLTAFAKQFDIQLLTHNDPKELLSEASFQEALQESIPDIRAHEWVPLWLLRYSVIVKSRGIIKSKGYILQAKRKGS.

S59 carries the phosphoserine modification. The residue at position 263 (K263) is an N6-acetyllysine.

It belongs to the aldo/keto reductase family. Glutamate--cysteine ligase light chain subfamily. As to quaternary structure, heterodimer of a catalytic heavy chain and a regulatory light chain.

Its pathway is sulfur metabolism; glutathione biosynthesis; glutathione from L-cysteine and L-glutamate: step 1/2. This Bos taurus (Bovine) protein is Glutamate--cysteine ligase regulatory subunit (GCLM).